The following is a 325-amino-acid chain: Foldase protein PrsA (325 aa).

Positions 1–20 (MKLMNKIIVPVTASALLLGA) are cleaved as a signal peptide. Cysteine 21 is lipidated: N-palmitoyl cysteine. Cysteine 21 carries the S-diacylglycerol cysteine lipid modification. The PpiC domain maps to 139–245 (ENSKKASHIL…YGYHIIKADK (107 aa)). Disordered regions lie at residues 159 to 202 (EGLS…KKDG) and 303 to 325 (PDKI…NSGS).

This sequence belongs to the PrsA family.

It is found in the cell membrane. It carries out the reaction [protein]-peptidylproline (omega=180) = [protein]-peptidylproline (omega=0). Plays a major role in protein secretion by helping the post-translocational extracellular folding of several secreted proteins. The sequence is that of Foldase protein PrsA from Staphylococcus epidermidis (strain ATCC 12228 / FDA PCI 1200).